The chain runs to 89 residues: Small ribosomal subunit protein uS17 (89 aa).

This sequence belongs to the universal ribosomal protein uS17 family. In terms of assembly, part of the 30S ribosomal subunit.

Functionally, one of the primary rRNA binding proteins, it binds specifically to the 5'-end of 16S ribosomal RNA. The chain is Small ribosomal subunit protein uS17 from Lactiplantibacillus plantarum (strain ATCC BAA-793 / NCIMB 8826 / WCFS1) (Lactobacillus plantarum).